The chain runs to 430 residues: Trigger factor (430 aa).

The 86-residue stretch at 163 to 248 (GNIAIIDFKG…IKDIKVKELP (86 aa)) folds into the PPIase FKBP-type domain.

Belongs to the FKBP-type PPIase family. Tig subfamily.

The protein localises to the cytoplasm. It catalyses the reaction [protein]-peptidylproline (omega=180) = [protein]-peptidylproline (omega=0). In terms of biological role, involved in protein export. Acts as a chaperone by maintaining the newly synthesized protein in an open conformation. Functions as a peptidyl-prolyl cis-trans isomerase. In Clostridium botulinum (strain Kyoto / Type A2), this protein is Trigger factor.